Reading from the N-terminus, the 217-residue chain is Protein GrpE (217 aa).

Residues 1–10 (MSDHAEHAAD) are compositionally biased toward basic and acidic residues. The interval 1–39 (MSDHAEHAADAADTDAPEGDDAGGDDGEQAGDDGTSALS) is disordered. The segment covering 12–31 (ADTDAPEGDDAGGDDGEQAG) has biased composition (acidic residues).

Belongs to the GrpE family. In terms of assembly, homodimer.

It localises to the cytoplasm. Its function is as follows. Participates actively in the response to hyperosmotic and heat shock by preventing the aggregation of stress-denatured proteins, in association with DnaK and GrpE. It is the nucleotide exchange factor for DnaK and may function as a thermosensor. Unfolded proteins bind initially to DnaJ; upon interaction with the DnaJ-bound protein, DnaK hydrolyzes its bound ATP, resulting in the formation of a stable complex. GrpE releases ADP from DnaK; ATP binding to DnaK triggers the release of the substrate protein, thus completing the reaction cycle. Several rounds of ATP-dependent interactions between DnaJ, DnaK and GrpE are required for fully efficient folding. This is Protein GrpE from Halobacterium salinarum (strain ATCC 29341 / DSM 671 / R1).